The primary structure comprises 156 residues: Neuroactive polyprotein R15 (156 aa).

Positions 1-26 (MDSAGLHINFRLSHVLTVVTCILYIL) are cleaved as a signal peptide. A propeptide spanning residues 27–48 (PPTTTAYSLPAPGKAAFQHQLS) is cleaved from the precursor. Cys-74 and Cys-81 are oxidised to a cystine. Gln-120 is subject to Pyrrolidone carboxylic acid.

Expressed within the abdominal ganglion in neurons R15, RB(HE), the two L9(G) gill motoneurons, and L40 interneuron, all are parts of autonomic control circuit that contributes to implementing a central command to coordinate autonomic activity with escape locomotion.

It localises to the secreted. The alpha-1 peptide acts as an osmoregulatory peptide, increasing blood volume, and also modulates the activity of a set of cardiac motor neurons that control heart rate. The sequence is that of Neuroactive polyprotein R15 from Aplysia californica (California sea hare).